The primary structure comprises 206 residues: Dephospho-CoA kinase (206 aa).

The region spanning Ile6 to Lys206 is the DPCK domain. Position 14-19 (Ala14–Thr19) interacts with ATP.

It belongs to the CoaE family.

The protein resides in the cytoplasm. The catalysed reaction is 3'-dephospho-CoA + ATP = ADP + CoA + H(+). It functions in the pathway cofactor biosynthesis; coenzyme A biosynthesis; CoA from (R)-pantothenate: step 5/5. Its function is as follows. Catalyzes the phosphorylation of the 3'-hydroxyl group of dephosphocoenzyme A to form coenzyme A. The protein is Dephospho-CoA kinase of Carboxydothermus hydrogenoformans (strain ATCC BAA-161 / DSM 6008 / Z-2901).